We begin with the raw amino-acid sequence, 274 residues long: Thiamine kinase (274 aa).

Belongs to the thiamine kinase family.

It carries out the reaction thiamine + ATP = thiamine phosphate + ADP + H(+). The protein operates within cofactor biosynthesis; thiamine diphosphate biosynthesis; thiamine phosphate from thiamine: step 1/1. In terms of biological role, catalyzes the ATP-dependent phosphorylation of thiamine to thiamine phosphate. Is involved in thiamine salvage. This chain is Thiamine kinase, found in Escherichia coli (strain K12 / MC4100 / BW2952).